A 31-amino-acid chain; its full sequence is Cytochrome b6-f complex subunit 6 (31 aa).

A helical membrane pass occupies residues 4-24 (ITSYFGFLLVVLTITSALFIG).

It belongs to the PetL family. The 4 large subunits of the cytochrome b6-f complex are cytochrome b6, subunit IV (17 kDa polypeptide, PetD), cytochrome f and the Rieske protein, while the 4 small subunits are PetG, PetL, PetM and PetN. The complex functions as a dimer.

It localises to the plastid. The protein resides in the chloroplast thylakoid membrane. Its function is as follows. Component of the cytochrome b6-f complex, which mediates electron transfer between photosystem II (PSII) and photosystem I (PSI), cyclic electron flow around PSI, and state transitions. PetL is important for photoautotrophic growth as well as for electron transfer efficiency and stability of the cytochrome b6-f complex. The sequence is that of Cytochrome b6-f complex subunit 6 from Jasminum nudiflorum (Winter jasmine).